A 149-amino-acid polypeptide reads, in one-letter code: Nucleoside diphosphate kinase (149 aa).

The ATP site is built by Lys9, Phe57, Arg85, Thr91, Arg102, and Asn112. The active-site Pros-phosphohistidine intermediate is the His115.

Belongs to the NDK family. Homotetramer. Mg(2+) serves as cofactor.

It localises to the cytoplasm. It carries out the reaction a 2'-deoxyribonucleoside 5'-diphosphate + ATP = a 2'-deoxyribonucleoside 5'-triphosphate + ADP. The catalysed reaction is a ribonucleoside 5'-diphosphate + ATP = a ribonucleoside 5'-triphosphate + ADP. Functionally, major role in the synthesis of nucleoside triphosphates other than ATP. The ATP gamma phosphate is transferred to the NDP beta phosphate via a ping-pong mechanism, using a phosphorylated active-site intermediate. In Staphylococcus epidermidis (strain ATCC 35984 / DSM 28319 / BCRC 17069 / CCUG 31568 / BM 3577 / RP62A), this protein is Nucleoside diphosphate kinase.